Consider the following 119-residue polypeptide: Beta-2-microglobulin (119 aa).

The signal sequence occupies residues 1-20; it reads MSRSVALAVLALLSLSGLEA. Positions 25-114 constitute an Ig-like C1-type domain; that stretch reads PKIQVYSRHP…VTLSGPRTVK (90 aa). Residues Cys45 and Cys100 are joined by a disulfide bond.

Belongs to the beta-2-microglobulin family. Heterodimer of an alpha chain and a beta chain. Beta-2-microglobulin is the beta-chain of major histocompatibility complex class I molecules.

The protein resides in the secreted. In terms of biological role, component of the class I major histocompatibility complex (MHC). Involved in the presentation of peptide antigens to the immune system. The chain is Beta-2-microglobulin (B2M) from Papio anubis (Olive baboon).